The chain runs to 119 residues: Large ribosomal subunit protein uL24 (119 aa).

Belongs to the universal ribosomal protein uL24 family. Part of the 50S ribosomal subunit.

Functionally, one of two assembly initiator proteins, it binds directly to the 5'-end of the 23S rRNA, where it nucleates assembly of the 50S subunit. In terms of biological role, one of the proteins that surrounds the polypeptide exit tunnel on the outside of the subunit. The sequence is that of Large ribosomal subunit protein uL24 from Leptospira interrogans serogroup Icterohaemorrhagiae serovar copenhageni (strain Fiocruz L1-130).